The sequence spans 121 residues: UPF0738 protein BLi01253/BL05110 (121 aa).

This sequence belongs to the UPF0738 family.

The chain is UPF0738 protein BLi01253/BL05110 from Bacillus licheniformis (strain ATCC 14580 / DSM 13 / JCM 2505 / CCUG 7422 / NBRC 12200 / NCIMB 9375 / NCTC 10341 / NRRL NRS-1264 / Gibson 46).